Consider the following 298-residue polypeptide: Tyrosine recombinase XerC (298 aa).

The region spanning 2–88 (TDLHTDVERY…ALRSFFDWLV (87 aa)) is the Core-binding (CB) domain. Residues 109 to 288 (HLPKNIDVDD…DFQHLASVYD (180 aa)) enclose the Tyr recombinase domain. Residues Arg148, Lys172, His240, Arg243, and His266 contribute to the active site. The active-site O-(3'-phospho-DNA)-tyrosine intermediate is the Tyr275.

This sequence belongs to the 'phage' integrase family. XerC subfamily. As to quaternary structure, forms a cyclic heterotetrameric complex composed of two molecules of XerC and two molecules of XerD, in which XerC interacts with XerD via its C-terminal region, XerD interacts with XerC via its C-terminal region and so on.

Its subcellular location is the cytoplasm. FtsK may regulate the catalytic switch between XerC and XerD in the heterotetrameric complex during the two steps of the recombination process. In terms of biological role, site-specific tyrosine recombinase, which acts by catalyzing the cutting and rejoining of the recombining DNA molecules. Binds cooperatively to specific DNA consensus sequences that are separated from XerD binding sites by a short central region, forming the heterotetrameric XerC-XerD complex that recombines DNA substrates. The complex is essential to convert dimers of the bacterial chromosome into monomers to permit their segregation at cell division. It also contributes to the segregational stability of plasmids. In the complex XerC specifically exchanges the top DNA strands. In Escherichia coli (strain 55989 / EAEC), this protein is Tyrosine recombinase XerC.